The primary structure comprises 1237 residues: Tyrosine-protein kinase sid-3 (1237 aa).

In terms of domain architecture, Protein kinase spans 107 to 369 (IKLYELIGEG…REDLVAAMFL (263 aa)). ATP-binding positions include 113-121 (IGEGSFAVV) and Lys-139. The Proton acceptor role is filled by Asp-230. The region spanning 366–426 (AMFLDAVARE…PRSVVFAQTN (61 aa)) is the SH3 domain. Disordered stretches follow at residues 683-704 (NQGS…GIQN), 741-802 (PPAP…APVQ), 826-919 (IQPQ…EERR), 940-986 (SNST…SEPI), 999-1018 (SATT…PSPP), and 1134-1156 (QQRQ…SAAS). Polar residues-rich tracts occupy residues 749–766 (QPVS…TLQK), 778–791 (KRPT…SNGF), and 847–863 (SAPT…SQAS). Composition is skewed to low complexity over residues 881–910 (TPIT…TSTT) and 940–961 (SNST…PSTA). Residues 1138 to 1156 (AGSSSRAVPPASASTSAAS) show a composition bias toward low complexity.

This sequence belongs to the protein kinase superfamily. Tyr protein kinase family. SYK/ZAP-70 subfamily. As to expression, ubiquitously present in all tissues tested. Expressed in the somatic cells of gut, pharynx, body wall muscle, neurons, skin and excretory canal cells.

The protein localises to the cytoplasm. It carries out the reaction L-tyrosyl-[protein] + ATP = O-phospho-L-tyrosyl-[protein] + ADP + H(+). Its function is as follows. Tyrosine-protein kinase which plays a role in RNA-mediated gene silencing by mediating import of double-stranded RNA (dsRNA) into cells. Not required for import of ingested dsRNA into intestinal cells but involved in subsequent export from intestinal cells to internal tissues. This is Tyrosine-protein kinase sid-3 (sid-3) from Caenorhabditis elegans.